The primary structure comprises 2339 residues: Inverse autotransporter adhesin YeeJ (2339 aa).

An N-terminal signal peptide occupies residues 1–26 (MGIKLRRLTAGICLITQLAFPMAAAA). The 49-residue stretch at 50-98 (VPYTLGALESAQSVAERFGISVAELRKLNQFRTFARGFDNVRQGDELDV) folds into the LysM domain. The segment at 125–400 (TSQQIGSLLA…SRYDLVDRNN (276 aa)) is inverse autotransporter. The invasin 3 domain stretch occupies residues 513-605 (QKDSSVSLST…GVDAAKAPAV (93 aa)). Big-1 domains follow at residues 721–815 (IATL…VSFV), 822–913 (QVDL…VNFI), 920–1017 (ALTL…MTFV), 1024–1121 (VVVL…VTFV), 1128–1221 (QVVL…VHFI), 1229–1331 (IIEL…SINV), 1339–1432 (HLTL…VTYV), 1439–1535 (EITL…VNFI), 1542–1639 (QVNL…VTLI), 1646–1730 (KLAS…PTEV), 1746–1837 (ITSL…LEAI), 1840–1934 (KLTL…VKVT), and 1942–2034 (VASF…ITLV). The C-type lectin domain stretch occupies residues 2236 to 2339 (KSWWVNAGEA…FAYATCYKNL (104 aa)).

The protein belongs to the intimin/invasin family.

The protein resides in the cell outer membrane. In terms of biological role, a cryptic inverse autotransporter, it is not expressed in wild-type strain MG1655. Upon overexpression shows increased adherence to polyvinyl chloride (PVC) plates and increased mature biofilm formation. Probably binds peptidoglycan. In Escherichia coli (strain K12), this protein is Inverse autotransporter adhesin YeeJ (yeeJ).